The sequence spans 38 residues: Potassium channel toxin alpha-KTx 2.13 (38 aa).

3 disulfides stabilise this stretch: Cys-7–Cys-29, Cys-13–Cys-34, and Cys-17–Cys-36.

Belongs to the short scorpion toxin superfamily. Potassium channel inhibitor family. Alpha-KTx 02 subfamily. In terms of tissue distribution, expressed by the venom gland.

Its subcellular location is the secreted. In terms of biological role, selective inhibitor of voltage-gated potassium channels, blocks the Kv1.2/KCNA2 (Kd=1.3 nM) and Kv1.3/KCNA3 (Kd=7.2 nM) channels. Association and dissociation rates of the toxin are slower for Kv1.2/KCNA2 than for Kv1.3/KCNA3. This Centruroides suffusus (Durango bark scorpion) protein is Potassium channel toxin alpha-KTx 2.13.